We begin with the raw amino-acid sequence, 447 residues long: Phosphoglucosamine mutase (447 aa).

The active-site Phosphoserine intermediate is serine 88. The Mg(2+) site is built by serine 88, aspartate 231, aspartate 233, and aspartate 235. Serine 88 bears the Phosphoserine mark.

This sequence belongs to the phosphohexose mutase family. Mg(2+) is required as a cofactor. In terms of processing, activated by phosphorylation.

The catalysed reaction is alpha-D-glucosamine 1-phosphate = D-glucosamine 6-phosphate. Catalyzes the conversion of glucosamine-6-phosphate to glucosamine-1-phosphate. This is Phosphoglucosamine mutase from Methanococcus maripaludis (strain C5 / ATCC BAA-1333).